Consider the following 823-residue polypeptide: Molybdenum cofactor sulfurase (823 aa).

Residue lysine 228 is modified to N6-(pyridoxal phosphate)lysine. The active site involves cysteine 392. Residues 628–667 (SSTRLAEPRRGLGSRKSPLRPAMPGAFPQDTPTPEAERNP) are disordered. The region spanning 644-819 (SPLRPAMPGA…VMVGDVVTPS (176 aa)) is the MOSC domain.

The protein belongs to the class-V pyridoxal-phosphate-dependent aminotransferase family. MOCOS subfamily. Pyridoxal 5'-phosphate is required as a cofactor.

It catalyses the reaction Mo-molybdopterin + L-cysteine + AH2 = thio-Mo-molybdopterin + L-alanine + A + H2O. The protein operates within cofactor biosynthesis; molybdopterin biosynthesis. Functionally, sulfurates the molybdenum cofactor. Sulfation of molybdenum is essential for xanthine dehydrogenase (XDH) and aldehyde oxidase (ADO) enzymes in which molybdenum cofactor is liganded by 1 oxygen and 1 sulfur atom in active form. The sequence is that of Molybdenum cofactor sulfurase from Aspergillus niger (strain ATCC MYA-4892 / CBS 513.88 / FGSC A1513).